We begin with the raw amino-acid sequence, 118 residues long: Pterin-4-alpha-carbinolamine dehydratase (118 aa).

Belongs to the pterin-4-alpha-carbinolamine dehydratase family.

It catalyses the reaction (4aS,6R)-4a-hydroxy-L-erythro-5,6,7,8-tetrahydrobiopterin = (6R)-L-erythro-6,7-dihydrobiopterin + H2O. In terms of biological role, involved in tetrahydrobiopterin biosynthesis. Seems to both prevent the formation of 7-pterins and accelerate the formation of quinonoid-BH2. May also have a positive regulatory role in the expression of phhA. The polypeptide is Pterin-4-alpha-carbinolamine dehydratase (phhB) (Pseudomonas syringae pv. tomato (strain ATCC BAA-871 / DC3000)).